A 364-amino-acid polypeptide reads, in one-letter code: Phospho-N-acetylmuramoyl-pentapeptide-transferase (364 aa).

Transmembrane regions (helical) follow at residues 18–38 (SLLI…AQIL), 48–68 (LFPL…VVPV), 91–111 (GTPT…ALIW), 114–134 (LDPA…IGWI), 154–174 (LILQ…TQSA), 183–203 (GQII…VLVA), 214–234 (VDGL…ALMA), 237–257 (NPGL…FIVH), 280–300 (AIGI…IFFV), and 343–363 (TQIV…AVIS).

It belongs to the glycosyltransferase 4 family. MraY subfamily. The cofactor is Mg(2+).

Its subcellular location is the cell inner membrane. The enzyme catalyses UDP-N-acetyl-alpha-D-muramoyl-L-alanyl-gamma-D-glutamyl-meso-2,6-diaminopimeloyl-D-alanyl-D-alanine + di-trans,octa-cis-undecaprenyl phosphate = di-trans,octa-cis-undecaprenyl diphospho-N-acetyl-alpha-D-muramoyl-L-alanyl-D-glutamyl-meso-2,6-diaminopimeloyl-D-alanyl-D-alanine + UMP. The protein operates within cell wall biogenesis; peptidoglycan biosynthesis. Functionally, catalyzes the initial step of the lipid cycle reactions in the biosynthesis of the cell wall peptidoglycan: transfers peptidoglycan precursor phospho-MurNAc-pentapeptide from UDP-MurNAc-pentapeptide onto the lipid carrier undecaprenyl phosphate, yielding undecaprenyl-pyrophosphoryl-MurNAc-pentapeptide, known as lipid I. This is Phospho-N-acetylmuramoyl-pentapeptide-transferase from Rippkaea orientalis (strain PCC 8801 / RF-1) (Cyanothece sp. (strain PCC 8801)).